We begin with the raw amino-acid sequence, 386 residues long: Protein-glutamate methylesterase/protein-glutamine glutaminase 3 (386 aa).

The Response regulatory domain maps to 4–121 (KVLVVDDSGF…SRNPQKVKQL (118 aa)). A 4-aspartylphosphate modification is found at Asp-55. Residues 132–194 (SNRRSSGFGS…SHAPAHPTTS (63 aa)) show a composition bias toward low complexity. The disordered stretch occupies residues 132-197 (SNRRSSGFGS…PAHPTTSGTA (66 aa)). In terms of domain architecture, CheB-type methylesterase spans 191 to 383 (PTTSGTAKRK…LDDIGRHLVE (193 aa)). Active-site residues include Ser-210, His-237, and Asp-330.

The protein belongs to the CheB family. Post-translationally, phosphorylated by CheA. Phosphorylation of the N-terminal regulatory domain activates the methylesterase activity.

The protein resides in the cytoplasm. The enzyme catalyses [protein]-L-glutamate 5-O-methyl ester + H2O = L-glutamyl-[protein] + methanol + H(+). It catalyses the reaction L-glutaminyl-[protein] + H2O = L-glutamyl-[protein] + NH4(+). Its function is as follows. Involved in chemotaxis. Part of a chemotaxis signal transduction system that modulates chemotaxis in response to various stimuli. Catalyzes the demethylation of specific methylglutamate residues introduced into the chemoreceptors (methyl-accepting chemotaxis proteins or MCP) by CheR. Also mediates the irreversible deamidation of specific glutamine residues to glutamic acid. The sequence is that of Protein-glutamate methylesterase/protein-glutamine glutaminase 3 from Pseudomonas syringae pv. syringae (strain B728a).